A 302-amino-acid chain; its full sequence is MNAHKLTHLKQLESESIHIFREVVSEFERPVMLYSIGKDSAVMLHLAMKAFYPGKPPFPLMHVDTTWKFRDMIAFRDRRAQELGLDLIIHVNEEGVRQGINPFVHGSKKHTDIMKTEGLKQALDKYRFDAAFGGARRDEEKSRAKERVYSFRDRHHRWDPKNQRPELWNLYNGKINKGESIRVFPLSNWTELDVWQYIYLEDIPIVPLYFAAERPVVERDGMLIMVDDERMPLLPGEVPMRKKVRFRTLGCYPLTGAIESDAATLPEIIQEMLLTRTSERQGRLIDHDQAGSMEEKKKEGYF.

It belongs to the PAPS reductase family. CysD subfamily. Heterodimer composed of CysD, the smaller subunit, and CysN.

It catalyses the reaction sulfate + ATP + H(+) = adenosine 5'-phosphosulfate + diphosphate. Its pathway is sulfur metabolism; hydrogen sulfide biosynthesis; sulfite from sulfate: step 1/3. Functionally, with CysN forms the ATP sulfurylase (ATPS) that catalyzes the adenylation of sulfate producing adenosine 5'-phosphosulfate (APS) and diphosphate, the first enzymatic step in sulfur assimilation pathway. APS synthesis involves the formation of a high-energy phosphoric-sulfuric acid anhydride bond driven by GTP hydrolysis by CysN coupled to ATP hydrolysis by CysD. In Methylococcus capsulatus (strain ATCC 33009 / NCIMB 11132 / Bath), this protein is Sulfate adenylyltransferase subunit 2.